The following is a 953-amino-acid chain: Pyruvate, phosphate dikinase, chloroplastic (953 aa).

The N-terminal 77 residues, 1–77 (MMSSLSVEGM…VLNPVSPPVT (77 aa)), are a transit peptide targeting the chloroplast. A disordered region spans residues 55-74 (PELRSSGLTPPRAVLNPVSP). Threonine 533 is subject to Phosphothreonine; by PDRP1. The active-site Tele-phosphohistidine intermediate is the histidine 535. Residues arginine 641, arginine 698, glutamate 827, glycine 848, threonine 849, asparagine 850, and aspartate 851 each coordinate substrate. Glutamate 827 serves as a coordination point for Mg(2+). Aspartate 851 contributes to the Mg(2+) binding site. Cysteine 913 serves as the catalytic Proton donor.

Belongs to the PEP-utilizing enzyme family. In terms of assembly, homotetramer. Mg(2+) serves as cofactor. Post-translationally, phosphorylation of Thr-533 in the dark inactivates the enzyme. Dephosphorylation upon light stimulation reactivates the enzyme.

It is found in the plastid. The protein resides in the chloroplast. The catalysed reaction is pyruvate + phosphate + ATP = phosphoenolpyruvate + AMP + diphosphate + H(+). Its pathway is photosynthesis; C4 acid pathway. With respect to regulation, activated by light-induced dephosphorylation. Inhibited by dark-induced phosphorylation. Both reactions are catalyzed by PDRP1. Inactivated by cold due to the dissociation of the homotetramer. Functionally, formation of phosphoenolpyruvate, which is the primary acceptor of CO(2) in C4 and some Crassulacean acid metabolism plants. The chain is Pyruvate, phosphate dikinase, chloroplastic from Flaveria bidentis (Coastal plain yellowtops).